The primary structure comprises 303 residues: N-acetyl-D-glucosamine kinase (303 aa).

ATP-binding positions include 4-11 (GFDIGGTK) and 133-140 (GVGGGLIF). Zn(2+)-binding residues include His-157, Cys-177, Cys-179, and Cys-184.

Belongs to the ROK (NagC/XylR) family. NagK subfamily.

The catalysed reaction is N-acetyl-D-glucosamine + ATP = N-acetyl-D-glucosamine 6-phosphate + ADP + H(+). Its pathway is cell wall biogenesis; peptidoglycan recycling. Functionally, catalyzes the phosphorylation of N-acetyl-D-glucosamine (GlcNAc) derived from cell-wall degradation, yielding GlcNAc-6-P. This Escherichia coli O139:H28 (strain E24377A / ETEC) protein is N-acetyl-D-glucosamine kinase.